The sequence spans 307 residues: Serine/threonine-protein phosphatase 4 catalytic subunit (307 aa).

Residues D54, H56, D82, and N114 each coordinate Mn(2+). H115 acts as the Proton donor in catalysis. Residues H164 and H238 each coordinate Mn(2+). L307 bears the Leucine methyl ester mark.

Belongs to the PPP phosphatase family. PP-4 (PP-X) subfamily. In terms of assembly, serine/threonine-protein phosphatase 4 (PP4) occurs in different assemblies of the catalytic and one or more regulatory subunits. Mn(2+) serves as cofactor.

It localises to the cytoplasm. The protein resides in the nucleus. Its subcellular location is the cytoskeleton. It is found in the microtubule organizing center. The protein localises to the centrosome. It catalyses the reaction O-phospho-L-seryl-[protein] + H2O = L-seryl-[protein] + phosphate. The catalysed reaction is O-phospho-L-threonyl-[protein] + H2O = L-threonyl-[protein] + phosphate. In terms of biological role, protein phosphatase that regulates many processes such as microtubule organization at centrosomes. In Xenopus laevis (African clawed frog), this protein is Serine/threonine-protein phosphatase 4 catalytic subunit (ppp4c).